A 176-amino-acid polypeptide reads, in one-letter code: NAD(P)H-quinone oxidoreductase subunit 6, chloroplastic (176 aa).

5 consecutive transmembrane segments (helical) span residues Phe10 to Thr30, Pro32 to Leu52, Leu63 to Ser83, Leu92 to Val112, and Phe152 to Val172.

Belongs to the complex I subunit 6 family. As to quaternary structure, NDH is composed of at least 16 different subunits, 5 of which are encoded in the nucleus.

Its subcellular location is the plastid. It is found in the chloroplast thylakoid membrane. It carries out the reaction a plastoquinone + NADH + (n+1) H(+)(in) = a plastoquinol + NAD(+) + n H(+)(out). The catalysed reaction is a plastoquinone + NADPH + (n+1) H(+)(in) = a plastoquinol + NADP(+) + n H(+)(out). Its function is as follows. NDH shuttles electrons from NAD(P)H:plastoquinone, via FMN and iron-sulfur (Fe-S) centers, to quinones in the photosynthetic chain and possibly in a chloroplast respiratory chain. The immediate electron acceptor for the enzyme in this species is believed to be plastoquinone. Couples the redox reaction to proton translocation, and thus conserves the redox energy in a proton gradient. This Cicer arietinum (Chickpea) protein is NAD(P)H-quinone oxidoreductase subunit 6, chloroplastic (ndhG).